Here is a 918-residue protein sequence, read N- to C-terminus: Signal transduction histidine-protein kinase BarA (918 aa).

At 1-9 (MTNYSLRAR) the chain is on the cytoplasmic side. A helical transmembrane segment spans residues 10-31 (MMILILAPTVLIGLLLSIFFVV). Residues 32–176 (HRYNDLQRQL…KSVRLQQYKE (145 aa)) are Periplasmic-facing. A helical transmembrane segment spans residues 177–196 (IFISSVMMLFCIGIALIFGW). The Cytoplasmic portion of the chain corresponds to 197 to 918 (RLMRDVTGPI…VAREASKILG (722 aa)). An HAMP domain is found at 200–252 (RDVTGPIRNMVNTVDRIRRGQLDSRVEGFMLGELDMLKNGINSMAMSLAAYHE). Positions 299-520 (NMSHELRTPL…TFWFHINLDL (222 aa)) constitute a Histidine kinase domain. H302 carries the phosphohistidine; by autocatalysis modification. One can recognise a Response regulatory domain in the interval 669-785 (TVMAVDDNPA…RLHNLLLRYK (117 aa)). 4-aspartylphosphate is present on D718. The HPt domain maps to 822–918 (KTDLARDMLQ…VAREASKILG (97 aa)). H861 is subject to Phosphohistidine.

Post-translationally, activation requires a sequential transfer of a phosphate group from a His in the primary transmitter domain, to an Asp in the receiver domain and to a His in the secondary transmitter domain.

It localises to the cell inner membrane. It carries out the reaction ATP + protein L-histidine = ADP + protein N-phospho-L-histidine.. In terms of biological role, member of the two-component regulatory system UvrY/BarA involved in the regulation of carbon metabolism via the CsrA/CsrB regulatory system. Phosphorylates UvrY, probably via a four-step phosphorelay. This chain is Signal transduction histidine-protein kinase BarA (barA), found in Escherichia coli O157:H7.